A 350-amino-acid chain; its full sequence is Hydroxymethylglutaryl-CoA synthase (350 aa).

Residue glutamate 83 is the Proton donor/acceptor of the active site. Residue cysteine 115 is the Acyl-thioester intermediate of the active site. Residues cysteine 115 and threonine 156 each coordinate (3S)-3-hydroxy-3-methylglutaryl-CoA. Arginine 204 contacts CoA. Threonine 206 and histidine 239 together coordinate (3S)-3-hydroxy-3-methylglutaryl-CoA. Histidine 239 acts as the Proton donor/acceptor in catalysis. Lysine 244 contacts CoA. Positions 271 and 301 each coordinate (3S)-3-hydroxy-3-methylglutaryl-CoA.

Belongs to the thiolase-like superfamily. Archaeal HMG-CoA synthase family. In terms of assembly, interacts with acetoacetyl-CoA thiolase that catalyzes the precedent step in the pathway and with a DUF35 protein. The acetoacetyl-CoA thiolase/HMG-CoA synthase complex channels the intermediate via a fused CoA-binding site, which allows for efficient coupling of the endergonic thiolase reaction with the exergonic HMGCS reaction.

It carries out the reaction acetoacetyl-CoA + acetyl-CoA + H2O = (3S)-3-hydroxy-3-methylglutaryl-CoA + CoA + H(+). Its pathway is metabolic intermediate biosynthesis; (R)-mevalonate biosynthesis; (R)-mevalonate from acetyl-CoA: step 2/3. Catalyzes the condensation of acetyl-CoA with acetoacetyl-CoA to form 3-hydroxy-3-methylglutaryl-CoA (HMG-CoA). Functions in the mevalonate (MVA) pathway leading to isopentenyl diphosphate (IPP), a key precursor for the biosynthesis of isoprenoid compounds that are building blocks of archaeal membrane lipids. The chain is Hydroxymethylglutaryl-CoA synthase from Pyrococcus horikoshii (strain ATCC 700860 / DSM 12428 / JCM 9974 / NBRC 100139 / OT-3).